The sequence spans 213 residues: Uridine kinase (213 aa).

15–22 is a binding site for ATP; the sequence is GASASGKS.

Belongs to the uridine kinase family.

It localises to the cytoplasm. The catalysed reaction is uridine + ATP = UMP + ADP + H(+). The enzyme catalyses cytidine + ATP = CMP + ADP + H(+). The protein operates within pyrimidine metabolism; CTP biosynthesis via salvage pathway; CTP from cytidine: step 1/3. It participates in pyrimidine metabolism; UMP biosynthesis via salvage pathway; UMP from uridine: step 1/1. This chain is Uridine kinase, found in Escherichia coli O157:H7.